The chain runs to 434 residues: Hydrogenobyrinate a,c-diamide synthase (434 aa).

The region spanning 243-434 is the GATase cobBQ-type domain; that stretch reads RIAVARDIAF…MHLIDVAGAA (192 aa). C326 (nucleophile) is an active-site residue.

The protein belongs to the CobB/CbiA family. As to quaternary structure, homodimer. Mg(2+) serves as cofactor.

The catalysed reaction is hydrogenobyrinate + 2 L-glutamine + 2 ATP + 2 H2O = hydrogenobyrinate a,c-diamide + 2 L-glutamate + 2 ADP + 2 phosphate + 2 H(+). Its pathway is cofactor biosynthesis; adenosylcobalamin biosynthesis; cob(II)yrinate a,c-diamide from precorrin-2 (aerobic route): step 9/10. In terms of biological role, catalyzes the ATP-dependent amidation of the two carboxylate groups at positions a and c of hydrogenobyrinate, using either L-glutamine or ammonia as the nitrogen source. To a much lesser extent, can also use cobyrinate as substrate in vitro, but the physiological substrate is indeed hydrogenobyrinate, as part of the aerobic pathway for cobalamin biosynthesis. This is Hydrogenobyrinate a,c-diamide synthase from Sinorhizobium sp.